We begin with the raw amino-acid sequence, 136 residues long: Small ribosomal subunit protein eS8 (136 aa).

It belongs to the eukaryotic ribosomal protein eS8 family. As to quaternary structure, part of the 30S ribosomal subunit.

The protein is Small ribosomal subunit protein eS8 (rps8e) of Aeropyrum pernix (strain ATCC 700893 / DSM 11879 / JCM 9820 / NBRC 100138 / K1).